The following is a 458-amino-acid chain: Bifunctional protein GlmU (458 aa).

Positions 1–230 are pyrophosphorylase; that stretch reads MLQIDVVILA…DWEVVGVNDK (230 aa). Residues 9–12, lysine 23, glutamine 75, and 80–81 contribute to the UDP-N-acetyl-alpha-D-glucosamine site; these read LAAG and GT. Aspartate 104 contributes to the Mg(2+) binding site. Glycine 139, glutamate 155, asparagine 170, and asparagine 228 together coordinate UDP-N-acetyl-alpha-D-glucosamine. Asparagine 228 serves as a coordination point for Mg(2+). Positions 231 to 251 are linker; sequence IQLSTLERAHQQDVAKGLMEQ. The segment at 252-458 is N-acetyltransferase; that stretch reads GVMFADPARF…NWKRPKKNKD (207 aa). UDP-N-acetyl-alpha-D-glucosamine contacts are provided by arginine 334 and lysine 352. The active-site Proton acceptor is histidine 364. Tyrosine 367 and asparagine 378 together coordinate UDP-N-acetyl-alpha-D-glucosamine. Residues alanine 381, 387-388, serine 406, alanine 424, and arginine 441 contribute to the acetyl-CoA site; that span reads NY.

This sequence in the N-terminal section; belongs to the N-acetylglucosamine-1-phosphate uridyltransferase family. The protein in the C-terminal section; belongs to the transferase hexapeptide repeat family. Homotrimer. The cofactor is Mg(2+).

The protein resides in the cytoplasm. It catalyses the reaction alpha-D-glucosamine 1-phosphate + acetyl-CoA = N-acetyl-alpha-D-glucosamine 1-phosphate + CoA + H(+). The enzyme catalyses N-acetyl-alpha-D-glucosamine 1-phosphate + UTP + H(+) = UDP-N-acetyl-alpha-D-glucosamine + diphosphate. The protein operates within nucleotide-sugar biosynthesis; UDP-N-acetyl-alpha-D-glucosamine biosynthesis; N-acetyl-alpha-D-glucosamine 1-phosphate from alpha-D-glucosamine 6-phosphate (route II): step 2/2. It participates in nucleotide-sugar biosynthesis; UDP-N-acetyl-alpha-D-glucosamine biosynthesis; UDP-N-acetyl-alpha-D-glucosamine from N-acetyl-alpha-D-glucosamine 1-phosphate: step 1/1. Its pathway is bacterial outer membrane biogenesis; LPS lipid A biosynthesis. In terms of biological role, catalyzes the last two sequential reactions in the de novo biosynthetic pathway for UDP-N-acetylglucosamine (UDP-GlcNAc). The C-terminal domain catalyzes the transfer of acetyl group from acetyl coenzyme A to glucosamine-1-phosphate (GlcN-1-P) to produce N-acetylglucosamine-1-phosphate (GlcNAc-1-P), which is converted into UDP-GlcNAc by the transfer of uridine 5-monophosphate (from uridine 5-triphosphate), a reaction catalyzed by the N-terminal domain. This is Bifunctional protein GlmU from Nitrosomonas eutropha (strain DSM 101675 / C91 / Nm57).